The primary structure comprises 230 residues: MKLFQNSYDFNYPWDQVTAANWKKYPNEISTHVIAVDVLRRELKDQGKVLVTERLITVKQGVPKWIMMMLGGTNMSHVREVSVVDLNKKSLTMRSCNLTMCNLLKVYETVTYSPHPDDSANKTLFQQEAQITAYGSIRKLCNKMEDWSVQRFCENAKKGKMGFDAVLQVFSENWEKHVDDLSNQLVSKVNETMEDVKISAGTLLKGTERSGRTILQQNIDLFRDAYNHEN.

In terms of domain architecture, PRELI/MSF1 spans 1-175 (MKLFQNSYDF…VLQVFSENWE (175 aa)).

It belongs to the slowmo family. In terms of assembly, interacts with MDM35.

It localises to the mitochondrion inner membrane. The protein resides in the mitochondrion intermembrane space. Its function is as follows. Required for mitochondrial cristae morphogenesis and MGM1-processing. Controls the stability of mitochondrial phosphatidylethanolamine (PE). With UPS1, controls the level of cardiolipin in mitochondria. Cardiolipin is a unique phospholipid with four fatty acid chains and is present mainly in the mitochondrial inner membrane where it stabilizes the electron transport chain supercomplex between complexes III and IV through direct interaction of their subunits. The sequence is that of Protein UPS2, mitochondrial (UPS2) from Saccharomyces cerevisiae (strain ATCC 204508 / S288c) (Baker's yeast).